Here is a 339-residue protein sequence, read N- to C-terminus: Phenylalanine--tRNA ligase alpha subunit (339 aa).

Position 250 (Glu-250) interacts with Mg(2+).

It belongs to the class-II aminoacyl-tRNA synthetase family. Phe-tRNA synthetase alpha subunit type 1 subfamily. Tetramer of two alpha and two beta subunits. The cofactor is Mg(2+).

Its subcellular location is the cytoplasm. The enzyme catalyses tRNA(Phe) + L-phenylalanine + ATP = L-phenylalanyl-tRNA(Phe) + AMP + diphosphate + H(+). The protein is Phenylalanine--tRNA ligase alpha subunit of Flavobacterium johnsoniae (strain ATCC 17061 / DSM 2064 / JCM 8514 / BCRC 14874 / CCUG 350202 / NBRC 14942 / NCIMB 11054 / UW101) (Cytophaga johnsonae).